Consider the following 284-residue polypeptide: 4-diphosphocytidyl-2-C-methyl-D-erythritol kinase (284 aa).

The active site involves Lys-14. Residue 98–108 (PMGGGLGGGSS) coordinates ATP. Asp-140 is an active-site residue.

This sequence belongs to the GHMP kinase family. IspE subfamily.

It carries out the reaction 4-CDP-2-C-methyl-D-erythritol + ATP = 4-CDP-2-C-methyl-D-erythritol 2-phosphate + ADP + H(+). It functions in the pathway isoprenoid biosynthesis; isopentenyl diphosphate biosynthesis via DXP pathway; isopentenyl diphosphate from 1-deoxy-D-xylulose 5-phosphate: step 3/6. Catalyzes the phosphorylation of the position 2 hydroxy group of 4-diphosphocytidyl-2C-methyl-D-erythritol. The chain is 4-diphosphocytidyl-2-C-methyl-D-erythritol kinase from Shewanella sp. (strain W3-18-1).